Reading from the N-terminus, the 448-residue chain is Probable glycine dehydrogenase (decarboxylating) subunit 1 (448 aa).

It belongs to the GcvP family. N-terminal subunit subfamily. In terms of assembly, the glycine cleavage system is composed of four proteins: P, T, L and H. In this organism, the P 'protein' is a heterodimer of two subunits.

It catalyses the reaction N(6)-[(R)-lipoyl]-L-lysyl-[glycine-cleavage complex H protein] + glycine + H(+) = N(6)-[(R)-S(8)-aminomethyldihydrolipoyl]-L-lysyl-[glycine-cleavage complex H protein] + CO2. In terms of biological role, the glycine cleavage system catalyzes the degradation of glycine. The P protein binds the alpha-amino group of glycine through its pyridoxal phosphate cofactor; CO(2) is released and the remaining methylamine moiety is then transferred to the lipoamide cofactor of the H protein. The chain is Probable glycine dehydrogenase (decarboxylating) subunit 1 from Listeria monocytogenes serotype 4a (strain HCC23).